Reading from the N-terminus, the 1234-residue chain is 1-phosphatidylinositol 4,5-bisphosphate phosphodiesterase beta-3 (1234 aa).

Position 2 is an N-acetylalanine (Ala2). Residues 315–466 enclose the PI-PLC X-box domain; it reads MDMTQPLSAY…LMGRILVKNK (152 aa). Residues His330 and His377 contribute to the active site. The tract at residues 465–586 is disordered; the sequence is NKKRHRPSTG…GTASSEVNAT (122 aa). Phosphoserine occurs at positions 472, 488, 493, and 535. Over residues 486–513 the composition is skewed to low complexity; that stretch reads EQSNSALSESSAATEPSSPQLGSPSSDS. The segment covering 554 to 566 has biased composition (acidic residues); the sequence is REDEEEDEEEEET. The span at 577-586 shows a compositional bias: polar residues; the sequence is GTASSEVNAT. Positions 589-705 constitute a PI-PLC Y-box domain; sequence MSTLVNYVEP…GYLLKPEFMR (117 aa). Residues 706 to 834 enclose the C2 domain; sequence RPDKSFDPFT…RNEANQPLCL (129 aa). The span at 886–907 shows a compositional bias: polar residues; that stretch reads ASTEMCQETPSQQQGSQLSSNP. The disordered stretch occupies residues 886–936; that stretch reads ASTEMCQETPSQQQGSQLSSNPVPNPLDDSPRWPPGPTTSPTSTSLSSPGQ. Positions 924–934 are enriched in low complexity; sequence TSPTSTSLSSP. Residues Ser925 and Ser1105 each carry the phosphoserine modification. A disordered region spans residues 1196 to 1234; sequence SEGLGDGPLVACASNGHAAGSGGHQSGADSESQEENTQL. The interval 1231 to 1234 is interaction with SHANK2; it reads NTQL.

As to quaternary structure, interacts with LPAR2. Interacts with SHANK2. Ca(2+) serves as cofactor. Expressed in parotid gland, brain, liver, uterus, lung, heart, adrenal gland, and ovary. Not detected in spleen, pancreas, intestine, thymus or kidney.

The protein resides in the cytoplasm. Its subcellular location is the membrane. The protein localises to the nucleus. The catalysed reaction is a 1,2-diacyl-sn-glycero-3-phospho-(1D-myo-inositol-4,5-bisphosphate) + H2O = 1D-myo-inositol 1,4,5-trisphosphate + a 1,2-diacyl-sn-glycerol + H(+). The enzyme catalyses a 1,2-diacyl-sn-glycero-3-phospho-(1D-myo-inositol) + H2O = 1D-myo-inositol 1-phosphate + a 1,2-diacyl-sn-glycerol + H(+). With respect to regulation, activated by G(q)/G(11) G alpha proteins in response to ligand-binding to G protein-coupled receptors. Functionally, catalyzes the production of the second messenger molecules diacylglycerol (DAG) and inositol 1,4,5-trisphosphate (IP3). Key transducer of G protein-coupled receptor signaling: activated by G(q)/G(11) G alpha proteins downstream of G protein-coupled receptors activation. In neutrophils, participates in a phospholipase C-activating N-formyl peptide-activated GPCR (G protein-coupled receptor) signaling pathway by promoting RASGRP4 activation by DAG, to promote neutrophil functional responses. The chain is 1-phosphatidylinositol 4,5-bisphosphate phosphodiesterase beta-3 from Rattus norvegicus (Rat).